A 35-amino-acid polypeptide reads, in one-letter code: U14-ctenitoxin-Pn1a (35 aa).

Intrachain disulfides connect C3–C17, C10–C22, and C16–C32.

Expressed by the venom gland.

Its subcellular location is the secreted. Functionally, neurotoxin. The chain is U14-ctenitoxin-Pn1a from Phoneutria nigriventer (Brazilian armed spider).